The chain runs to 420 residues: Transcription termination factor Rho (420 aa).

The 76-residue stretch at 49–124 (DIFGGGVLEI…LKVDQVNDDK (76 aa)) folds into the Rho RNA-BD domain. Residues 170–175 (GKGQRG), 182–187 (KAGKTM), and Arg-213 contribute to the ATP site.

It belongs to the Rho family. Homohexamer. The homohexamer assembles into an open ring structure.

Facilitates transcription termination by a mechanism that involves Rho binding to the nascent RNA, activation of Rho's RNA-dependent ATPase activity, and release of the mRNA from the DNA template. The chain is Transcription termination factor Rho from Haemophilus influenzae (strain ATCC 51907 / DSM 11121 / KW20 / Rd).